We begin with the raw amino-acid sequence, 219 residues long: Small ribosomal subunit protein uS3 (219 aa).

A KH type-2 domain is found at 38–106 (VRKFVKTKLQ…QVAVNIVEVK (69 aa)).

The protein belongs to the universal ribosomal protein uS3 family. Part of the 30S ribosomal subunit. Forms a tight complex with proteins S10 and S14.

In terms of biological role, binds the lower part of the 30S subunit head. Binds mRNA in the 70S ribosome, positioning it for translation. The polypeptide is Small ribosomal subunit protein uS3 (Desulfitobacterium hafniense (strain DSM 10664 / DCB-2)).